The chain runs to 115 residues: Large ribosomal subunit protein uL22 (115 aa).

The protein belongs to the universal ribosomal protein uL22 family. In terms of assembly, part of the 50S ribosomal subunit.

This protein binds specifically to 23S rRNA; its binding is stimulated by other ribosomal proteins, e.g. L4, L17, and L20. It is important during the early stages of 50S assembly. It makes multiple contacts with different domains of the 23S rRNA in the assembled 50S subunit and ribosome. Functionally, the globular domain of the protein is located near the polypeptide exit tunnel on the outside of the subunit, while an extended beta-hairpin is found that lines the wall of the exit tunnel in the center of the 70S ribosome. This is Large ribosomal subunit protein uL22 from Thioalkalivibrio sulfidiphilus (strain HL-EbGR7).